The following is a 484-amino-acid chain: tRNA sulfurtransferase (484 aa).

The THUMP domain maps to 61-165; the sequence is TLLVELLGRI…NDKMMLIKAR (105 aa). ATP-binding positions include 183 to 184, Lys-265, Gly-287, and Gln-296; that span reads LI. Cys-344 and Cys-456 form a disulfide bridge. Positions 404–484 constitute a Rhodanese domain; it reads LSANEVILDI…DNVKVLNKIS (81 aa). Cys-456 functions as the Cysteine persulfide intermediate in the catalytic mechanism.

This sequence belongs to the ThiI family.

Its subcellular location is the cytoplasm. The enzyme catalyses [ThiI sulfur-carrier protein]-S-sulfanyl-L-cysteine + a uridine in tRNA + 2 reduced [2Fe-2S]-[ferredoxin] + ATP + H(+) = [ThiI sulfur-carrier protein]-L-cysteine + a 4-thiouridine in tRNA + 2 oxidized [2Fe-2S]-[ferredoxin] + AMP + diphosphate. It catalyses the reaction [ThiS sulfur-carrier protein]-C-terminal Gly-Gly-AMP + S-sulfanyl-L-cysteinyl-[cysteine desulfurase] + AH2 = [ThiS sulfur-carrier protein]-C-terminal-Gly-aminoethanethioate + L-cysteinyl-[cysteine desulfurase] + A + AMP + 2 H(+). It participates in cofactor biosynthesis; thiamine diphosphate biosynthesis. In terms of biological role, catalyzes the ATP-dependent transfer of a sulfur to tRNA to produce 4-thiouridine in position 8 of tRNAs, which functions as a near-UV photosensor. Also catalyzes the transfer of sulfur to the sulfur carrier protein ThiS, forming ThiS-thiocarboxylate. This is a step in the synthesis of thiazole, in the thiamine biosynthesis pathway. The sulfur is donated as persulfide by IscS. This is tRNA sulfurtransferase from Histophilus somni (strain 2336) (Haemophilus somnus).